Reading from the N-terminus, the 390-residue chain is Magnesium-protoporphyrin IX monomethyl ester [oxidative] cyclase (390 aa).

The tract at residues 1 to 20 (MSQSTIESTNKKEINKGKAP) is disordered.

This sequence belongs to the AcsF family. Requires Fe cation as cofactor.

It carries out the reaction Mg-protoporphyrin IX 13-monomethyl ester + 3 NADPH + 3 O2 + 2 H(+) = 3,8-divinyl protochlorophyllide a + 3 NADP(+) + 5 H2O. It participates in porphyrin-containing compound metabolism; chlorophyll biosynthesis (light-independent). Functionally, catalyzes the formation of the isocyclic ring in chlorophyll biosynthesis. Mediates the cyclase reaction, which results in the formation of divinylprotochlorophyllide (Pchlide) characteristic of all chlorophylls from magnesium-protoporphyrin IX 13-monomethyl ester (MgPMME). This chain is Magnesium-protoporphyrin IX monomethyl ester [oxidative] cyclase, found in Prochlorococcus marinus (strain MIT 9301).